Consider the following 213-residue polypeptide: Chloramphenicol acetyltransferase 2 (213 aa).

The active-site Proton acceptor is the His189.

This sequence belongs to the chloramphenicol acetyltransferase family. Homotrimer.

It catalyses the reaction chloramphenicol + acetyl-CoA = chloramphenicol 3-acetate + CoA. This enzyme is an effector of chloramphenicol resistance in bacteria. In Haemophilus influenzae, this protein is Chloramphenicol acetyltransferase 2 (cat-IIH).